Here is a 230-residue protein sequence, read N- to C-terminus: Ribose-5-phosphate isomerase A (230 aa).

Substrate contacts are provided by residues 29-32, 85-88, and 98-101; these read TGST, DGAD, and KGGG. Glutamate 107 (proton acceptor) is an active-site residue. Lysine 125 is a substrate binding site.

Belongs to the ribose 5-phosphate isomerase family. Homodimer.

The catalysed reaction is aldehydo-D-ribose 5-phosphate = D-ribulose 5-phosphate. Its pathway is carbohydrate degradation; pentose phosphate pathway; D-ribose 5-phosphate from D-ribulose 5-phosphate (non-oxidative stage): step 1/1. Catalyzes the reversible conversion of ribose-5-phosphate to ribulose 5-phosphate. The chain is Ribose-5-phosphate isomerase A from Staphylococcus epidermidis (strain ATCC 35984 / DSM 28319 / BCRC 17069 / CCUG 31568 / BM 3577 / RP62A).